A 529-amino-acid polypeptide reads, in one-letter code: ATP synthase subunit alpha (529 aa).

Position 173 to 180 (173 to 180) interacts with ATP; it reads GDRQTGKT.

The protein belongs to the ATPase alpha/beta chains family. In terms of assembly, F-type ATPases have 2 components, CF(1) - the catalytic core - and CF(0) - the membrane proton channel. CF(1) has five subunits: alpha(3), beta(3), gamma(1), delta(1), epsilon(1). CF(0) has three main subunits: a(1), b(2) and c(9-12). The alpha and beta chains form an alternating ring which encloses part of the gamma chain. CF(1) is attached to CF(0) by a central stalk formed by the gamma and epsilon chains, while a peripheral stalk is formed by the delta and b chains.

It is found in the cell membrane. The enzyme catalyses ATP + H2O + 4 H(+)(in) = ADP + phosphate + 5 H(+)(out). Functionally, produces ATP from ADP in the presence of a proton gradient across the membrane. The alpha chain is a regulatory subunit. This Streptomyces lividans protein is ATP synthase subunit alpha.